Here is a 263-residue protein sequence, read N- to C-terminus: MARRPLVMGNWKLNGSKAFTKELIEGLKAELHDVTGCDVAIAPPVMYLGTAEAALSGCGCSCGGKSVIQLGAQNVDINVKGAFTGDISTEMLKDFGAKYIIIGHSERRTYHKESDEFVAKKFGALKEAGLVPVLCIGESEAENEAGKTEEVCARQIDAVINALGVEAFNGAVIAYEPIWAIGTGKSATPAQAQAVHAFIRGHIAAKSQAVAEQVIIQYGGSVNDANAAELFTQPDIDGALVGGASLKAPAFAVIVKAAAAAKN.

Residue 10-12 coordinates substrate; the sequence is NWK. Residue histidine 104 is the Electrophile of the active site. The active-site Proton acceptor is glutamate 176. Substrate contacts are provided by residues glycine 182, serine 221, and 242-243; that span reads GG.

Belongs to the triosephosphate isomerase family. Homodimer.

It is found in the cytoplasm. It catalyses the reaction D-glyceraldehyde 3-phosphate = dihydroxyacetone phosphate. Its pathway is carbohydrate biosynthesis; gluconeogenesis. It functions in the pathway carbohydrate degradation; glycolysis; D-glyceraldehyde 3-phosphate from glycerone phosphate: step 1/1. Functionally, involved in the gluconeogenesis. Catalyzes stereospecifically the conversion of dihydroxyacetone phosphate (DHAP) to D-glyceraldehyde-3-phosphate (G3P). This is Triosephosphate isomerase from Haemophilus influenzae (strain ATCC 51907 / DSM 11121 / KW20 / Rd).